The following is a 520-amino-acid chain: ATP synthase subunit alpha 2 (520 aa).

Gly-176–Thr-183 contacts ATP.

This sequence belongs to the ATPase alpha/beta chains family. F-type ATPases have 2 components, CF(1) - the catalytic core - and CF(0) - the membrane proton channel. CF(1) has five subunits: alpha(3), beta(3), gamma(1), delta(1), epsilon(1). CF(0) has three main subunits: a(1), b(2) and c(9-12). The alpha and beta chains form an alternating ring which encloses part of the gamma chain. CF(1) is attached to CF(0) by a central stalk formed by the gamma and epsilon chains, while a peripheral stalk is formed by the delta and b chains.

The protein resides in the cell inner membrane. The enzyme catalyses ATP + H2O + 4 H(+)(in) = ADP + phosphate + 5 H(+)(out). Functionally, produces ATP from ADP in the presence of a proton gradient across the membrane. The alpha chain is a regulatory subunit. The polypeptide is ATP synthase subunit alpha 2 (Polaromonas naphthalenivorans (strain CJ2)).